We begin with the raw amino-acid sequence, 284 residues long: Elongation factor Ts (284 aa).

Residues 80-83 form an involved in Mg(2+) ion dislocation from EF-Tu region; sequence TDFV.

This sequence belongs to the EF-Ts family.

The protein localises to the cytoplasm. Functionally, associates with the EF-Tu.GDP complex and induces the exchange of GDP to GTP. It remains bound to the aminoacyl-tRNA.EF-Tu.GTP complex up to the GTP hydrolysis stage on the ribosome. The protein is Elongation factor Ts of Neisseria meningitidis serogroup A / serotype 4A (strain DSM 15465 / Z2491).